A 150-amino-acid chain; its full sequence is Peptide deformylase (150 aa).

Positions 88 and 130 each coordinate Fe cation. The active site involves Glu-131. His-134 lines the Fe cation pocket.

This sequence belongs to the polypeptide deformylase family. Fe(2+) is required as a cofactor.

It catalyses the reaction N-terminal N-formyl-L-methionyl-[peptide] + H2O = N-terminal L-methionyl-[peptide] + formate. Its function is as follows. Removes the formyl group from the N-terminal Met of newly synthesized proteins. Requires at least a dipeptide for an efficient rate of reaction. N-terminal L-methionine is a prerequisite for activity but the enzyme has broad specificity at other positions. The chain is Peptide deformylase from Desulfitobacterium hafniense (strain DSM 10664 / DCB-2).